The sequence spans 615 residues: Afadin- and alpha-actinin-binding protein (615 aa).

Coiled-coil stretches lie at residues 126–227 (KLGS…IAMD) and 266–293 (RQKQ…SLLS). Ser290, Ser293, Ser313, and Ser319 each carry phosphoserine. The segment at 293–316 (SPQKKKPRERAEDGTGTVAISDIE) is disordered. Residues 375–461 (ISRQDHEQET…RSFTEAAIRL (87 aa)) are a coiled coil. Ser537, Ser541, and Ser543 each carry phosphoserine. Residues 567–615 (PEESKPSEVARESTDQKWSVQSRPSSREGCYSGCSSAFRSAHGDRDDLP) are disordered. Basic and acidic residues predominate over residues 568–581 (EESKPSEVARESTD).

Belongs to the ADIP family. As to quaternary structure, interacts with SSX2 and SSX3. Does not interact with SSX1 and SSX4. Interacts with afadin and alpha-actinin. Interacts with VAV2. Interacts with PCM1. Interacts with WRAP73. In terms of tissue distribution, widely expressed.

The protein localises to the cell junction. The protein resides in the adherens junction. It localises to the nucleus. It is found in the cytoplasm. Its subcellular location is the cytoskeleton. The protein localises to the microtubule organizing center. The protein resides in the centrosome. It localises to the centriolar satellite. It is found in the cilium basal body. Its function is as follows. Belongs to an adhesion system, which plays a role in the organization of homotypic, interneuronal and heterotypic cell-cell adherens junctions (AJs). May connect the nectin-afadin and E-cadherin-catenin system through alpha-actinin and may be involved in organization of the actin cytoskeleton at AJs through afadin and alpha-actinin. Acts as a centrosome maturation factor, probably by maintaining the integrity of the pericentriolar material and proper microtubule nucleation at mitotic spindle poles. The function seems to implicate at least in part WRAP73; the SSX2IP:WRAP73 complex is proposed to act as regulator of spindle anchoring at the mitotic centrosome. Involved in cell movement: localizes at the leading edge of moving cells in response to PDGF and is required for the formation of the leading edge and the promotion of cell movement, possibly via activation of Rac signaling. Involved in ciliogenesis. It is required for targeted recruitment of the BBSome, CEP290, RAB8, and SSTR3 to the cilia. This Mus musculus (Mouse) protein is Afadin- and alpha-actinin-binding protein (Ssx2ip).